Consider the following 204-residue polypeptide: Cytochrome c biogenesis ATP-binding export protein CcmA (204 aa).

In terms of domain architecture, ABC transporter spans 2 to 204 (IEVRDLGVSR…LDAEDLGGFL (203 aa)). 34 to 41 (GPNGIGKT) contributes to the ATP binding site.

This sequence belongs to the ABC transporter superfamily. CcmA exporter (TC 3.A.1.107) family. In terms of assembly, the complex is composed of two ATP-binding proteins (CcmA) and two transmembrane proteins (CcmB).

Its subcellular location is the cell inner membrane. It catalyses the reaction heme b(in) + ATP + H2O = heme b(out) + ADP + phosphate + H(+). Its function is as follows. Part of the ABC transporter complex CcmAB involved in the biogenesis of c-type cytochromes; once thought to export heme, this seems not to be the case, but its exact role is uncertain. Responsible for energy coupling to the transport system. The protein is Cytochrome c biogenesis ATP-binding export protein CcmA of Ruegeria sp. (strain TM1040) (Silicibacter sp.).